Here is a 612-residue protein sequence, read N- to C-terminus: Phosphopentomutase (612 aa).

Position 2 is an N-acetylalanine (A2). R63 and S165 together coordinate alpha-D-glucose 1,6-bisphosphate. S165 (phosphoserine intermediate) is an active-site residue. Mg(2+) contacts are provided by S165, D322, D324, and D326. The residue at position 165 (S165) is a Phosphoserine. Positions 326, 327, 400, 424, and 438 each coordinate alpha-D-glucose 1,6-bisphosphate.

It belongs to the phosphohexose mutase family. As to quaternary structure, monomer. The cofactor is Mg(2+).

The protein resides in the cytoplasm. It is found in the cytosol. The enzyme catalyses alpha-D-ribose 1-phosphate = D-ribose 5-phosphate. The catalysed reaction is 2-deoxy-alpha-D-ribose 1-phosphate = 2-deoxy-D-ribose 5-phosphate. It carries out the reaction alpha-D-glucose 1-phosphate = alpha-D-glucose 6-phosphate. It catalyses the reaction O-phospho-L-seryl-[protein] + alpha-D-glucose 1-phosphate = alpha-D-glucose 1,6-bisphosphate + L-seryl-[protein]. The enzyme catalyses alpha-D-glucose 1,6-bisphosphate + L-seryl-[protein] = O-phospho-L-seryl-[protein] + alpha-D-glucose 6-phosphate. Its activity is regulated as follows. The phosphomutase activity is stimulated by glucose 1,6-bisphosphate. In terms of biological role, catalyzes the conversion of the nucleoside breakdown products ribose-1-phosphate and deoxyribose-1-phosphate to the corresponding 5-phosphopentoses. Catalyzes the reversible isomerization of alpha-D-glucose 1-phosphate to alpha-D-glucose 6-phosphate but with a lower catalytic efficiency. The mechanism proceeds via the intermediate compound alpha-D-glucose 1,6-bisphosphate. In vitro, also has a low glucose 1,6-bisphosphate synthase activity which is most probably not physiologically relevant. The chain is Phosphopentomutase from Homo sapiens (Human).